The primary structure comprises 490 residues: Ribulose bisphosphate carboxylase large chain (490 aa).

Residues N127 and T177 each coordinate substrate. Catalysis depends on K179, which acts as the Proton acceptor. K181 contributes to the substrate binding site. Mg(2+)-binding residues include K205, D207, and E208. K205 bears the N6-carboxylysine mark. H297 serves as the catalytic Proton acceptor. R298, H330, and S382 together coordinate substrate.

Belongs to the RuBisCO large chain family. Type I subfamily. Heterohexadecamer of 8 large chains and 8 small chains. It depends on Mg(2+) as a cofactor.

The protein localises to the plastid. It is found in the chloroplast. The enzyme catalyses 2 (2R)-3-phosphoglycerate + 2 H(+) = D-ribulose 1,5-bisphosphate + CO2 + H2O. The catalysed reaction is D-ribulose 1,5-bisphosphate + O2 = 2-phosphoglycolate + (2R)-3-phosphoglycerate + 2 H(+). Functionally, ruBisCO catalyzes two reactions: the carboxylation of D-ribulose 1,5-bisphosphate, the primary event in carbon dioxide fixation, as well as the oxidative fragmentation of the pentose substrate in the photorespiration process. Both reactions occur simultaneously and in competition at the same active site. The chain is Ribulose bisphosphate carboxylase large chain from Thalassiosira nordenskioeldii (Marine diatom).